The sequence spans 515 residues: Maturase K (515 aa).

This sequence belongs to the intron maturase 2 family. MatK subfamily.

It localises to the plastid. The protein localises to the chloroplast. Functionally, usually encoded in the trnK tRNA gene intron. Probably assists in splicing its own and other chloroplast group II introns. This Trillium luteum (Yellow wakerobin) protein is Maturase K.